Here is a 664-residue protein sequence, read N- to C-terminus: DNA ligase (664 aa).

NAD(+) is bound by residues 32–36 (DKEYD) and 80–81 (SL). The active-site N6-AMP-lysine intermediate is K122. NAD(+) is bound by residues R144, E178, and K314. Zn(2+)-binding residues include C407, C410, C423, and C429. The region spanning 587 to 664 (IDENPFMGKT…NEEEFSNKIK (78 aa)) is the BRCT domain.

The protein belongs to the NAD-dependent DNA ligase family. LigA subfamily. Mg(2+) serves as cofactor. It depends on Mn(2+) as a cofactor.

It catalyses the reaction NAD(+) + (deoxyribonucleotide)n-3'-hydroxyl + 5'-phospho-(deoxyribonucleotide)m = (deoxyribonucleotide)n+m + AMP + beta-nicotinamide D-nucleotide.. In terms of biological role, DNA ligase that catalyzes the formation of phosphodiester linkages between 5'-phosphoryl and 3'-hydroxyl groups in double-stranded DNA using NAD as a coenzyme and as the energy source for the reaction. It is essential for DNA replication and repair of damaged DNA. The protein is DNA ligase of Clostridium botulinum (strain 657 / Type Ba4).